The sequence spans 258 residues: Small ribosomal subunit protein mS40 (258 aa).

The transit peptide at 1–35 (MAASILNVLLRRLPGVSPFRGAYGVQVLLQTLCTK) directs the protein to the mitochondrion. Position 49 is a phosphoserine (Ser-49). Positions 223–258 (RLREESGPPPELMPEVPLTAPAEASSTEPGAPQSAL) are disordered.

Belongs to the bacterial ribosomal protein bS18 family. Mitochondrion-specific ribosomal protein mS40 subfamily. In terms of assembly, component of the mitochondrial ribosome small subunit (28S) which comprises a 12S rRNA and about 30 distinct proteins.

It localises to the mitochondrion. This is Small ribosomal subunit protein mS40 (MRPS18B) from Sus scrofa (Pig).